The following is a 139-amino-acid chain: D-ribose pyranase (139 aa).

The active-site Proton donor is the His20. Residues Asp28, His106, and 128–130 contribute to the substrate site; that span reads YAN.

This sequence belongs to the RbsD / FucU family. RbsD subfamily. Homodecamer.

Its subcellular location is the cytoplasm. The enzyme catalyses beta-D-ribopyranose = beta-D-ribofuranose. It functions in the pathway carbohydrate metabolism; D-ribose degradation; D-ribose 5-phosphate from beta-D-ribopyranose: step 1/2. Catalyzes the interconversion of beta-pyran and beta-furan forms of D-ribose. This chain is D-ribose pyranase, found in Salmonella agona (strain SL483).